A 252-amino-acid polypeptide reads, in one-letter code: 3-deoxy-manno-octulosonate cytidylyltransferase (252 aa).

The protein belongs to the KdsB family.

Its subcellular location is the cytoplasm. It catalyses the reaction 3-deoxy-alpha-D-manno-oct-2-ulosonate + CTP = CMP-3-deoxy-beta-D-manno-octulosonate + diphosphate. It functions in the pathway nucleotide-sugar biosynthesis; CMP-3-deoxy-D-manno-octulosonate biosynthesis; CMP-3-deoxy-D-manno-octulosonate from 3-deoxy-D-manno-octulosonate and CTP: step 1/1. Its pathway is bacterial outer membrane biogenesis; lipopolysaccharide biosynthesis. Its function is as follows. Activates KDO (a required 8-carbon sugar) for incorporation into bacterial lipopolysaccharide in Gram-negative bacteria. The polypeptide is 3-deoxy-manno-octulosonate cytidylyltransferase (Trichlorobacter lovleyi (strain ATCC BAA-1151 / DSM 17278 / SZ) (Geobacter lovleyi)).